A 238-amino-acid chain; its full sequence is Peptidyl-tRNA hydrolase (238 aa).

Tyr-14 is a tRNA binding site. His-19 serves as the catalytic Proton acceptor. TRNA is bound by residues Phe-64, Asn-66, and Asn-112. The span at 190-202 shows a compositional bias: basic and acidic residues; that stretch reads KTEEPAPKPEKKT. Residues 190 to 225 form a disordered region; it reads KTEEPAPKPEKKTVAKSHIHQARNHNQPRMPESGPM. A compositionally biased stretch (basic residues) spans 203 to 212; sequence VAKSHIHQAR.

The protein belongs to the PTH family. In terms of assembly, monomer.

The protein resides in the cytoplasm. The enzyme catalyses an N-acyl-L-alpha-aminoacyl-tRNA + H2O = an N-acyl-L-amino acid + a tRNA + H(+). Hydrolyzes ribosome-free peptidyl-tRNAs (with 1 or more amino acids incorporated), which drop off the ribosome during protein synthesis, or as a result of ribosome stalling. Functionally, catalyzes the release of premature peptidyl moieties from peptidyl-tRNA molecules trapped in stalled 50S ribosomal subunits, and thus maintains levels of free tRNAs and 50S ribosomes. The sequence is that of Peptidyl-tRNA hydrolase from Rhizobium rhizogenes (strain K84 / ATCC BAA-868) (Agrobacterium radiobacter).